We begin with the raw amino-acid sequence, 227 residues long: Cytochrome c oxidase subunit 2 (227 aa).

Residues 1-14 (MAYPFQLGLQDATS) are Mitochondrial intermembrane-facing. Residues 15 to 45 (PIMEELLHFHDHTLMIVFLISSLVLYIISLM) form a helical membrane-spanning segment. The Mitochondrial matrix portion of the chain corresponds to 46 to 59 (LTTKLTHTSTMDAQ). A helical transmembrane segment spans residues 60-87 (EVETVWTILPAIILILIALPSLRILYMM). Residues 88-227 (DEINNPSLTV…YFETWSALMV (140 aa)) are Mitochondrial intermembrane-facing. Cu cation is bound by residues His161, Cys196, Glu198, Cys200, His204, and Met207. Residue Glu198 coordinates Mg(2+). Tyr218 bears the Phosphotyrosine mark.

It belongs to the cytochrome c oxidase subunit 2 family. Component of the cytochrome c oxidase (complex IV, CIV), a multisubunit enzyme composed of 14 subunits. The complex is composed of a catalytic core of 3 subunits MT-CO1, MT-CO2 and MT-CO3, encoded in the mitochondrial DNA, and 11 supernumerary subunits COX4I, COX5A, COX5B, COX6A, COX6B, COX6C, COX7A, COX7B, COX7C, COX8 and NDUFA4, which are encoded in the nuclear genome. The complex exists as a monomer or a dimer and forms supercomplexes (SCs) in the inner mitochondrial membrane with NADH-ubiquinone oxidoreductase (complex I, CI) and ubiquinol-cytochrome c oxidoreductase (cytochrome b-c1 complex, complex III, CIII), resulting in different assemblies (supercomplex SCI(1)III(2)IV(1) and megacomplex MCI(2)III(2)IV(2)). Found in a complex with TMEM177, COA6, COX18, COX20, SCO1 and SCO2. Interacts with TMEM177 in a COX20-dependent manner. Interacts with COX20. Interacts with COX16. Cu cation serves as cofactor.

The protein localises to the mitochondrion inner membrane. It carries out the reaction 4 Fe(II)-[cytochrome c] + O2 + 8 H(+)(in) = 4 Fe(III)-[cytochrome c] + 2 H2O + 4 H(+)(out). Its function is as follows. Component of the cytochrome c oxidase, the last enzyme in the mitochondrial electron transport chain which drives oxidative phosphorylation. The respiratory chain contains 3 multisubunit complexes succinate dehydrogenase (complex II, CII), ubiquinol-cytochrome c oxidoreductase (cytochrome b-c1 complex, complex III, CIII) and cytochrome c oxidase (complex IV, CIV), that cooperate to transfer electrons derived from NADH and succinate to molecular oxygen, creating an electrochemical gradient over the inner membrane that drives transmembrane transport and the ATP synthase. Cytochrome c oxidase is the component of the respiratory chain that catalyzes the reduction of oxygen to water. Electrons originating from reduced cytochrome c in the intermembrane space (IMS) are transferred via the dinuclear copper A center (CU(A)) of subunit 2 and heme A of subunit 1 to the active site in subunit 1, a binuclear center (BNC) formed by heme A3 and copper B (CU(B)). The BNC reduces molecular oxygen to 2 water molecules using 4 electrons from cytochrome c in the IMS and 4 protons from the mitochondrial matrix. This is Cytochrome c oxidase subunit 2 (MT-CO2) from Urocyon cinereoargenteus (Gray fox).